The chain runs to 317 residues: UV DNA damage endonuclease (317 aa).

The protein belongs to the uve1/UvsE family.

In terms of biological role, component in a DNA repair pathway. Removal of UV LIGHT damaged nucleotides. Recognizes pyrimidine dimers and cleave a phosphodiester bond immediately 5' to the lesion. The polypeptide is UV DNA damage endonuclease (Bacillus cereus (strain B4264)).